We begin with the raw amino-acid sequence, 866 residues long: DNA mismatch repair protein MutS (866 aa).

Position 618 to 625 (618 to 625 (GPNMSGKS)) interacts with ATP.

This sequence belongs to the DNA mismatch repair MutS family.

Functionally, this protein is involved in the repair of mismatches in DNA. It is possible that it carries out the mismatch recognition step. This protein has a weak ATPase activity. This chain is DNA mismatch repair protein MutS, found in Flavobacterium psychrophilum (strain ATCC 49511 / DSM 21280 / CIP 103535 / JIP02/86).